The primary structure comprises 91 residues: Class I hydrophobin E (91 aa).

Positions 1-16 are cleaved as a signal peptide; the sequence is MKFSIAAIALAAVAVA. 4 cysteine pairs are disulfide-bonded: C30-C72, C42-C64, C43-C55, and C73-C89. N-linked (GlcNAc...) asparagine glycosylation occurs at N83.

Belongs to the fungal hydrophobin family.

It localises to the secreted. The protein resides in the cell wall. Its subcellular location is the vacuole. The protein localises to the cytoplasmic vesicle. Its function is as follows. Aerial growth, conidiation, and dispersal of filamentous fungi in the environment rely upon a capability of their secreting small amphipathic proteins called hydrophobins (HPBs) with low sequence identity. Class I can self-assemble into an outermost layer of rodlet bundles on aerial cell surfaces, conferring cellular hydrophobicity that supports fungal growth, development and dispersal; whereas Class II form highly ordered films at water-air interfaces through intermolecular interactions but contribute nothing to the rodlet structure. Hyd1E contributes to certain cell wall-related features, such as hydrophobicity but is not involved in cell wall-related events during fungal proliferation in host hemocoel. Does not contribute to conidial hydrophobicity. This is Class I hydrophobin E from Beauveria bassiana (strain ARSEF 2860) (White muscardine disease fungus).